Consider the following 101-residue polypeptide: Acylphosphatase (101 aa).

In terms of domain architecture, Acylphosphatase-like spans 11–99 (SWLVKAIGRV…PRLNRFDRLP (89 aa)). Catalysis depends on residues R26 and N44.

It belongs to the acylphosphatase family.

The catalysed reaction is an acyl phosphate + H2O = a carboxylate + phosphate + H(+). This Polaromonas naphthalenivorans (strain CJ2) protein is Acylphosphatase (acyP).